Here is a 640-residue protein sequence, read N- to C-terminus: Probable potassium transport system protein Kup 1 (640 aa).

12 consecutive transmembrane segments (helical) span residues 24–44 (LGAL…TSPL), 67–87 (IASL…VLFV), 116–136 (VGPL…DGMI), 154–174 (PFFA…LFTI), 186–206 (FGPV…TEVV), 222–242 (TFLF…VLAV), 264–284 (WFAL…ALIL), 296–316 (MLVP…ATVI), 354–374 (IYIP…VVGF), 382–402 (AAYG…ALVV), 411–431 (LWLC…FLGA), and 436–456 (VTQG…LMAT).

This sequence belongs to the HAK/KUP transporter (TC 2.A.72) family.

It is found in the cell inner membrane. It carries out the reaction K(+)(in) + H(+)(in) = K(+)(out) + H(+)(out). Transport of potassium into the cell. Likely operates as a K(+):H(+) symporter. In Paramagnetospirillum magneticum (strain ATCC 700264 / AMB-1) (Magnetospirillum magneticum), this protein is Probable potassium transport system protein Kup 1.